A 523-amino-acid polypeptide reads, in one-letter code: Paraspeckle component 1 (523 aa).

At methionine 1 the chain carries N-acetylmethionine. RRM domains are found at residues cysteine 81 to histidine 153 and alanine 155 to glutamine 236. Positions glutamate 124–arginine 357 are sufficient for paraspeckles localization. Residues isoleucine 230–arginine 357 are sufficient for perinucleolar caps localization and interaction with NONO. A coiled-coil region spans residues aspartate 282 to glutamate 376. Residues serine 409, serine 473, and serine 477 each carry the phosphoserine modification. Positions glycine 460–tyrosine 523 are disordered. Residues proline 472–alanine 490 show a composition bias toward polar residues. Residues proline 497–phenylalanine 514 are compositionally biased toward gly residues. Arginine 507 carries the omega-N-methylarginine modification. The residue at position 509 (serine 509) is a Phosphoserine.

Belongs to the PSPC family. As to quaternary structure, forms heterodimers with NONO; this involves formation of a coiled coil domain by helices from both proteins. Found in a RNP complex with CAT2 transcribed nuclear RNA (CTN-RNA). Interaction with NONO is required for its targeting to paraspeckles and perinucleolar caps. Interacts with SFPQ. Part of the HDP-RNP complex composed of at least HEXIM1, PRKDC, XRCC5, XRCC6, paraspeckle proteins (SFPQ, NONO, PSPC1, RBM14, and MATR3) and NEAT1 RNA. Interacts with ALKBH5 (when acetylated); interaction with acetylated ALKBH5 facilitates recognition of N(6)-methyladenosine (m6A) RNAs. Isoform 1 is strongly expressed in testis (leptoten spermatocytes, round spematids and Sertoli cells) and moderately in cerebrum, cerebellum, lung, spleen and ovary (at protein level). Isoform 2 is strongly expressed in kidney and moderately in salivary gland (at protein level).

Its subcellular location is the nucleus speckle. The protein localises to the nucleus. It is found in the nucleolus. It localises to the nucleus matrix. The protein resides in the cytoplasm. RNA-binding protein required for the formation of nuclear paraspeckles. Binds to poly(A), poly(G) and poly(U) RNA homopolymers. Regulates, cooperatively with NONO and SFPQ, androgen receptor-mediated gene transcription activity in Sertoli cell line. Regulates the circadian clock by repressing the transcriptional activator activity of the CLOCK-BMAL1 heterodimer. Plays a role in the regulation of DNA virus-mediated innate immune response by assembling into the HDP-RNP complex, a complex that serves as a platform for IRF3 phosphorylation and subsequent innate immune response activation through the cGAS-STING pathway. In Mus musculus (Mouse), this protein is Paraspeckle component 1 (Pspc1).